A 101-amino-acid chain; its full sequence is Small ribosomal subunit protein uS14 (101 aa).

The interval 1–21 (MAKTSSVEKNNRRRKLADQYG) is disordered.

The protein belongs to the universal ribosomal protein uS14 family. Part of the 30S ribosomal subunit. Contacts proteins S3 and S10.

Binds 16S rRNA, required for the assembly of 30S particles and may also be responsible for determining the conformation of the 16S rRNA at the A site. This chain is Small ribosomal subunit protein uS14, found in Mesorhizobium japonicum (strain LMG 29417 / CECT 9101 / MAFF 303099) (Mesorhizobium loti (strain MAFF 303099)).